The chain runs to 69 residues: Small integral membrane protein 20 (69 aa).

At 1–8 (MAAARNLR) the chain is on the mitochondrial matrix side. A helical transmembrane segment spans residues 9-29 (TALIFGGFISMVGAAFYPIYF). Residues 30-69 (RPLLRLEEYQKEQAVNRAGIVQEDVQPPGLKVWSDPFGRK) lie on the Mitochondrial intermembrane side of the membrane. Phe-66 carries the post-translational modification Phenylalanine amide.

Component of the MITRAC (mitochondrial translation regulation assembly intermediate of cytochrome c oxidase complex) complex, the core components of this complex being Coa3/Mitrac12 and Cox14. Interacts with Coa3/Mitrac12 and Cox4i1. Directly interacts with newly synthesized Mt-Co1/Cox1. In terms of tissue distribution, highly expressed in the hypothalamus, substantia nigra reticulata, Edinger-Westphal nucleus, and nucleus of the solitary tract/dorsal motor nucleus of the vagus, the spinal cord, and sensory ganglia (at protein level). Also expressed in the heart, thymus, esophagus, stomach, spleen, lung, pituitary gland, kidney, jejunum, duodenum, ileum, cerebrum, pons, and colon (at protein level). Expressed in preadipocytes and apidocytes (at protein level). Expressed in pancreatic islet cells (at protein level).

It is found in the mitochondrion inner membrane. The protein localises to the secreted. Functionally, component of the MITRAC (mitochondrial translation regulation assembly intermediate of cytochrome c oxidase complex) complex, that regulates cytochrome c oxidase assembly. Promotes the progression of complex assembly after the association of Mt-Co1/Cox11 with Cox4I1 and Cox6c. Chaperone-like assembly factor required to stabilize newly synthesized Mt-Co1/Cox1 and to prevent its premature turnover. Peptide involved in a broad spectrum of regulatory functions. Is a ligand for GPR173. As part of the reproductive cycle, it regulates gonadotropin-releasing hormone (GnRH) signaling in the hypothalamus and pituitary gland which augments the release of luteinizing hormone. More specifically, it regulates the expression of transcription factors CEBPB and POU2F1/OCT1 through the cAMP-PKA signaling pathway, which subsequently regulate the expression of GNRHR and KISS1. Plays a protective role in memory retention through activation of GNRHR. Regulates the secretion of AVP by hypothalamic neurons. Plays a role in the transduction of the itch sensation. Induces anxiolytic effects, reducing behavior associated with anxiety. Regulates food intake as well as satiation and satiety by increasing NUCB2 expression in neurons. In the ovary, it regulates follicular growth by stimulating granulosa cell proliferation by increasing the expression of GPR173, CREB1, CYP19A1, KITLG, FSHR, and LHCGR. It also increases the production of estradiol (E2). In the heart, it regulates contractility and relaxation by activating the AKT1-NOS3 and MAPK1-MAPK3 signaling pathways. It also plays a cardioprotective role during ischemia, where it activates the SAFE and RISK pathways. Stimulates the proliferation and differentiation of preadipocytes. In pancreatic islet cells, it induces proliferation of islet cells as well as the production of INS1 and INS2 through activation of the MAPK1-MAPK3 signaling pathways. This is Small integral membrane protein 20 from Rattus norvegicus (Rat).